Consider the following 631-residue polypeptide: Phosphomethylpyrimidine synthase (631 aa).

Substrate is bound by residues Asn239, Met268, Tyr297, His333, 353 to 355 (SRG), 394 to 397 (DGLR), and Glu433. Residue His437 participates in Zn(2+) binding. Substrate is bound at residue Tyr460. Zn(2+) is bound at residue His501. Residues Cys581, Cys584, and Cys589 each coordinate [4Fe-4S] cluster.

Belongs to the ThiC family. In terms of assembly, homodimer. Requires [4Fe-4S] cluster as cofactor.

The catalysed reaction is 5-amino-1-(5-phospho-beta-D-ribosyl)imidazole + S-adenosyl-L-methionine = 4-amino-2-methyl-5-(phosphooxymethyl)pyrimidine + CO + 5'-deoxyadenosine + formate + L-methionine + 3 H(+). The protein operates within cofactor biosynthesis; thiamine diphosphate biosynthesis. Its function is as follows. Catalyzes the synthesis of the hydroxymethylpyrimidine phosphate (HMP-P) moiety of thiamine from aminoimidazole ribotide (AIR) in a radical S-adenosyl-L-methionine (SAM)-dependent reaction. The chain is Phosphomethylpyrimidine synthase from Escherichia coli O157:H7.